A 519-amino-acid polypeptide reads, in one-letter code: Galactokinase (519 aa).

4 residues coordinate alpha-D-galactose: R47, E53, H54, and D56. G159, G161, S163, and S164 together coordinate ATP. D209 contributes to the alpha-D-galactose binding site. The Proton acceptor role is filled by D209. Positions 257 and 258 each coordinate ATP. Residue Y266 coordinates alpha-D-galactose.

This sequence belongs to the GHMP kinase family. GalK subfamily.

It carries out the reaction alpha-D-galactose + ATP = alpha-D-galactose 1-phosphate + ADP + H(+). The protein operates within carbohydrate metabolism; galactose metabolism. Its function is as follows. Galactokinase is a key enzyme in the galactose metabolism where it catalyzes the conversion of alpha-D-galactose to galactose 1-phosphate. Can also induce the transcription of the gal genes in response to the organism being challenged with galactose as the sole source of carbon. This is Galactokinase (gal1) from Schizosaccharomyces pombe (strain 972 / ATCC 24843) (Fission yeast).